The following is a 432-amino-acid chain: Enolase (432 aa).

Residue Gln167 coordinates (2R)-2-phosphoglycerate. The active-site Proton donor is Glu209. Positions 246, 291, and 318 each coordinate Mg(2+). Lys343, Arg372, Ser373, and Lys394 together coordinate (2R)-2-phosphoglycerate. Lys343 (proton acceptor) is an active-site residue.

Belongs to the enolase family. In terms of assembly, component of the RNA degradosome, a multiprotein complex involved in RNA processing and mRNA degradation. Requires Mg(2+) as cofactor.

The protein localises to the cytoplasm. Its subcellular location is the secreted. It is found in the cell surface. It carries out the reaction (2R)-2-phosphoglycerate = phosphoenolpyruvate + H2O. Its pathway is carbohydrate degradation; glycolysis; pyruvate from D-glyceraldehyde 3-phosphate: step 4/5. In terms of biological role, catalyzes the reversible conversion of 2-phosphoglycerate (2-PG) into phosphoenolpyruvate (PEP). It is essential for the degradation of carbohydrates via glycolysis. The sequence is that of Enolase from Aliivibrio fischeri (strain MJ11) (Vibrio fischeri).